Reading from the N-terminus, the 155-residue chain is Small ribosomal subunit protein uS7 (155 aa).

Belongs to the universal ribosomal protein uS7 family. In terms of assembly, part of the 30S ribosomal subunit. Contacts proteins S9 and S11.

Functionally, one of the primary rRNA binding proteins, it binds directly to 16S rRNA where it nucleates assembly of the head domain of the 30S subunit. Is located at the subunit interface close to the decoding center, probably blocks exit of the E-site tRNA. This Corynebacterium glutamicum (strain R) protein is Small ribosomal subunit protein uS7.